A 144-amino-acid polypeptide reads, in one-letter code: Cell division protein SepF (144 aa).

Belongs to the SepF family. In terms of assembly, homodimer. Interacts with FtsZ.

The protein resides in the cytoplasm. In terms of biological role, cell division protein that is part of the divisome complex and is recruited early to the Z-ring. Probably stimulates Z-ring formation, perhaps through the cross-linking of FtsZ protofilaments. Its function overlaps with FtsA. In Oceanobacillus iheyensis (strain DSM 14371 / CIP 107618 / JCM 11309 / KCTC 3954 / HTE831), this protein is Cell division protein SepF.